A 773-amino-acid polypeptide reads, in one-letter code: DNA polymerase (773 aa).

Intrachain disulfides connect C428-C442 and C506-C509.

This sequence belongs to the DNA polymerase type-B family.

The catalysed reaction is DNA(n) + a 2'-deoxyribonucleoside 5'-triphosphate = DNA(n+1) + diphosphate. In terms of biological role, in addition to polymerase activity, this DNA polymerase exhibits 3' to 5' exonuclease activity. This is DNA polymerase (pol) from Thermococcus gorgonarius.